A 96-amino-acid polypeptide reads, in one-letter code: UPF0235 protein YggU (96 aa).

Belongs to the UPF0235 family.

The chain is UPF0235 protein YggU from Salmonella agona (strain SL483).